The chain runs to 157 residues: 3-dehydroquinate dehydratase (157 aa).

Tyrosine 24 serves as the catalytic Proton acceptor. Positions 75, 81, and 88 each coordinate substrate. Catalysis depends on histidine 101, which acts as the Proton donor. Substrate-binding positions include 102–103 (LS) and arginine 112.

This sequence belongs to the type-II 3-dehydroquinase family. Homododecamer.

The enzyme catalyses 3-dehydroquinate = 3-dehydroshikimate + H2O. It functions in the pathway metabolic intermediate biosynthesis; chorismate biosynthesis; chorismate from D-erythrose 4-phosphate and phosphoenolpyruvate: step 3/7. In terms of biological role, catalyzes a trans-dehydration via an enolate intermediate. This chain is 3-dehydroquinate dehydratase, found in Brucella canis (strain ATCC 23365 / NCTC 10854 / RM-666).